Reading from the N-terminus, the 192-residue chain is tRNA (pseudouridine(54)-N(1))-methyltransferase (192 aa).

Leucine 114 and glycine 138 together coordinate S-adenosyl-L-methionine.

It belongs to the methyltransferase superfamily. TrmY family. Homodimer.

It localises to the cytoplasm. It carries out the reaction pseudouridine(54) in tRNA + S-adenosyl-L-methionine = N(1)-methylpseudouridine(54) in tRNA + S-adenosyl-L-homocysteine + H(+). Functionally, specifically catalyzes the N1-methylation of pseudouridine at position 54 (Psi54) in tRNAs. The polypeptide is tRNA (pseudouridine(54)-N(1))-methyltransferase (Aeropyrum pernix (strain ATCC 700893 / DSM 11879 / JCM 9820 / NBRC 100138 / K1)).